Here is an 88-residue protein sequence, read N- to C-terminus: Cell division topological specificity factor (88 aa).

Belongs to the MinE family.

Its function is as follows. Prevents the cell division inhibition by proteins MinC and MinD at internal division sites while permitting inhibition at polar sites. This ensures cell division at the proper site by restricting the formation of a division septum at the midpoint of the long axis of the cell. The polypeptide is Cell division topological specificity factor (Escherichia fergusonii (strain ATCC 35469 / DSM 13698 / CCUG 18766 / IAM 14443 / JCM 21226 / LMG 7866 / NBRC 102419 / NCTC 12128 / CDC 0568-73)).